The chain runs to 158 residues: Endoribonuclease YbeY (158 aa).

3 residues coordinate Zn(2+): His-114, His-118, and His-124.

Belongs to the endoribonuclease YbeY family. It depends on Zn(2+) as a cofactor.

The protein localises to the cytoplasm. Functionally, single strand-specific metallo-endoribonuclease involved in late-stage 70S ribosome quality control and in maturation of the 3' terminus of the 16S rRNA. The sequence is that of Endoribonuclease YbeY from Pasteurella multocida (strain Pm70).